The primary structure comprises 265 residues: Mlc titration factor A (265 aa).

Zn(2+)-binding residues include histidine 111, histidine 148, histidine 152, and glutamate 211.

Belongs to the MtfA family. Interacts with Mlc. Zn(2+) serves as cofactor.

It is found in the cytoplasm. Its function is as follows. Involved in the modulation of the activity of the glucose-phosphotransferase system (glucose-PTS). Interacts with the transcriptional repressor Mlc, preventing its interaction with DNA and leading to the modulation of expression of genes regulated by Mlc, including ptsG, which encodes the PTS system glucose-specific EIICB component. Functionally, shows zinc-dependent metallopeptidase activity. This is Mlc titration factor A from Escherichia coli O6:K15:H31 (strain 536 / UPEC).